An 831-amino-acid polypeptide reads, in one-letter code: Phosphoinositide phosphatase SAC4 (831 aa).

Positions 162 to 551 (LCMVDLTKDF…GDTLAYQYGG (390 aa)) constitute an SAC domain. The tract at residues 439 to 475 (SDADTSPHNSSDDDSRDYDSLEKNCRPSKNVANGDYD) is disordered. The span at 448 to 463 (SSDDDSRDYDSLEKNC) shows a compositional bias: basic and acidic residues. The Phosphatase catalytic core motif lies at 487 to 498 (RTNCIDCLDRTN). The tract at residues 785-805 (PAMRESGSSSRKGKEPVETEL) is disordered. Over residues 796–805 (KGKEPVETEL) the composition is skewed to basic and acidic residues.

As to quaternary structure, component of the PI(3,5)P2 regulatory complex at least composed of ATG18, SAC/FIG4, FAB1 and VAC14. Requires Mg(2+) as cofactor. Ubiquitous with a higher level of expression in young seedlings than in other tissues.

The protein localises to the vacuole membrane. The catalysed reaction is a 1,2-diacyl-sn-glycero-3-phospho-(1D-myo-inositol-3,5-bisphosphate) + H2O = a 1,2-diacyl-sn-glycero-3-phospho-(1D-myo-inositol-3-phosphate) + phosphate. Its function is as follows. The PI(3,5)P2 regulatory complex regulates both the synthesis and turnover of phosphatidylinositol 3,5-bisphosphate (PtdIns(3,5)P2). The protein is Phosphoinositide phosphatase SAC4 (SAC4) of Arabidopsis thaliana (Mouse-ear cress).